Here is a 167-residue protein sequence, read N- to C-terminus: Ubiquitin-fold modifier-conjugating enzyme 1 (167 aa).

The active-site Glycyl thioester intermediate is C116.

Belongs to the ubiquitin-conjugating enzyme family. UFC1 subfamily. Interacts with UBA5 (via C-terminus). Interacts with UFL1. Interacts with UFM1.

E2-like enzyme which specifically catalyzes the second step in ufmylation. Accepts the ubiquitin-like modifier UFM1 from the E1 enzyme UBA5 and forms an intermediate with UFM1 via a thioester linkage. Ufmylation is involved in various processes, such as ribosome recycling, response to DNA damage, interferon response or reticulophagy (also called ER-phagy). The protein is Ubiquitin-fold modifier-conjugating enzyme 1 of Esox lucius (Northern pike).